The primary structure comprises 456 residues: Transcription factor tau subunit sfc1 (456 aa).

2 disordered regions span residues 394–416 and 437–456; these read DRYSNFDEQDNTDLNDTVRGLNT and HEGFEDLEEIDDDYDDIFGD. A compositionally biased stretch (polar residues) spans 407–416; the sequence is LNDTVRGLNT. The segment covering 441–456 has biased composition (acidic residues); that stretch reads EDLEEIDDDYDDIFGD.

Component of the TFIIIC complex including sfc1, sfc3, sfc4, sfc6 and sfc7. The subunits are organized in two globular domains, tauA and tauB, connected by a proteolysis-sensitive and flexible linker. Interacts with sfc3, sfc4 and sfc6. In terms of processing, phosphorylated.

Its subcellular location is the nucleus. Its function is as follows. TFIIIC mediates tRNA and 5S RNA gene activation by binding to intragenic promoter elements. Upstream of the transcription start site, TFIIIC assembles the initiation complex TFIIIB-TFIIIC-tDNA, which is sufficient for RNA polymerase III recruitment and function. Part of the tauA domain of TFIIIC that binds boxA DNA promoter sites of tRNA and similar genes. Participates in the interconnection of tauA with tauB via its contacts with sfc3 and sfc6. Serves as a scaffold critical for tauA-DNA spatial configuration and tauB-DNA stability. Localizes to chromatin insulator sequence without recruiting RNA polymerase III and plays a role in nuclear organization. This is Transcription factor tau subunit sfc1 (sfc1) from Schizosaccharomyces pombe (strain 972 / ATCC 24843) (Fission yeast).